Here is a 282-residue protein sequence, read N- to C-terminus: Bifunctional protein FolD (282 aa).

NADP(+) contacts are provided by residues 166–168 and serine 191; that span reads GRS.

Belongs to the tetrahydrofolate dehydrogenase/cyclohydrolase family. In terms of assembly, homodimer.

The enzyme catalyses (6R)-5,10-methylene-5,6,7,8-tetrahydrofolate + NADP(+) = (6R)-5,10-methenyltetrahydrofolate + NADPH. It carries out the reaction (6R)-5,10-methenyltetrahydrofolate + H2O = (6R)-10-formyltetrahydrofolate + H(+). It participates in one-carbon metabolism; tetrahydrofolate interconversion. Catalyzes the oxidation of 5,10-methylenetetrahydrofolate to 5,10-methenyltetrahydrofolate and then the hydrolysis of 5,10-methenyltetrahydrofolate to 10-formyltetrahydrofolate. This is Bifunctional protein FolD from Acidovorax ebreus (strain TPSY) (Diaphorobacter sp. (strain TPSY)).